The sequence spans 321 residues: MSLLVWGATLISGFIIVFALMPSLIRYFRARKEGQMIREEGPKWHEKKSGTPTMGGLLFIIAILVTTLWVGGWQHQLQPTTWILMFILVLYGALGFWDDSIKLWRKQNEGLKAWQKLLGQVIGAVILTLVYQHEHLPMALRIPGLGVWSLGIWYMLFAIIWLVGFSNAVNLTDGLDGLVAGQATIAFGAYAVIAYAQNQYNVMLFCLAVVGSLLGFFVYNHKPAKIFMGDMGSLALGGALAAVSILLHHELSLLLIGIIFVIETASVILQVASFKLTGKRIFLMSPIHHHFEMKGWSEWKIDIVFWSIGLVAAVISVATII.

9 helical membrane passes run 1–21, 53–73, 77–97, 110–130, 145–165, 174–194, 200–220, 226–248, and 301–321; these read MSLLVWGATLISGFIIVFALM, TMGGLLFIIAILVTTLWVGGW, LQPTTWILMFILVLYGALGFW, GLKAWQKLLGQVIGAVILTLV, LGVWSLGIWYMLFAIIWLVGF, GLDGLVAGQATIAFGAYAVIA, YNVMLFCLAVVGSLLGFFVYN, IFMGDMGSLALGGALAAVSILLH, and IDIVFWSIGLVAAVISVATII.

Belongs to the glycosyltransferase 4 family. MraY subfamily. It depends on Mg(2+) as a cofactor.

The protein resides in the cell membrane. The enzyme catalyses UDP-N-acetyl-alpha-D-muramoyl-L-alanyl-gamma-D-glutamyl-L-lysyl-D-alanyl-D-alanine + di-trans,octa-cis-undecaprenyl phosphate = Mur2Ac(oyl-L-Ala-gamma-D-Glu-L-Lys-D-Ala-D-Ala)-di-trans,octa-cis-undecaprenyl diphosphate + UMP. It functions in the pathway cell wall biogenesis; peptidoglycan biosynthesis. Functionally, catalyzes the initial step of the lipid cycle reactions in the biosynthesis of the cell wall peptidoglycan: transfers peptidoglycan precursor phospho-MurNAc-pentapeptide from UDP-MurNAc-pentapeptide onto the lipid carrier undecaprenyl phosphate, yielding undecaprenyl-pyrophosphoryl-MurNAc-pentapeptide, known as lipid I. This chain is Phospho-N-acetylmuramoyl-pentapeptide-transferase, found in Lactiplantibacillus plantarum (strain ATCC BAA-793 / NCIMB 8826 / WCFS1) (Lactobacillus plantarum).